The primary structure comprises 285 residues: uncharacterized protein (285 aa).

Mn(2+) contacts are provided by H110, D131, H133, D135, D214, and D216.

This sequence belongs to the arginase family. Requires Mn(2+) as cofactor.

This is an uncharacterized protein from Methanothermus fervidus.